Here is a 766-residue protein sequence, read N- to C-terminus: Protein translocase subunit SecA 2 (766 aa).

ATP contacts are provided by residues Gln84, 102–106 (GEGKT), and Asp490.

It belongs to the SecA family. As to quaternary structure, monomer and homodimer. Part of the essential Sec protein translocation apparatus which comprises SecA, SecYEG and auxiliary proteins SecDF. Other proteins may also be involved.

Its subcellular location is the cell membrane. The protein localises to the cytoplasm. It carries out the reaction ATP + H2O + cellular proteinSide 1 = ADP + phosphate + cellular proteinSide 2.. In terms of biological role, part of the Sec protein translocase complex. Interacts with the SecYEG preprotein conducting channel. Has a central role in coupling the hydrolysis of ATP to the transfer of proteins into and across the cell membrane, serving as an ATP-driven molecular motor driving the stepwise translocation of polypeptide chains across the membrane. The sequence is that of Protein translocase subunit SecA 2 from Thermobifida fusca (strain YX).